Here is a 269-residue protein sequence, read N- to C-terminus: Formamidopyrimidine-DNA glycosylase (269 aa).

The Schiff-base intermediate with DNA role is filled by proline 2. The Proton donor role is filled by glutamate 3. Lysine 57 serves as the catalytic Proton donor; for beta-elimination activity. DNA contacts are provided by histidine 90, arginine 109, and lysine 150. The FPG-type zinc finger occupies 235–269 (QVYGRGGEPCRVCGTPIQMAKHGQRSTFFCPACQH). Arginine 259 functions as the Proton donor; for delta-elimination activity in the catalytic mechanism.

It belongs to the FPG family. As to quaternary structure, monomer. Zn(2+) is required as a cofactor.

It carries out the reaction Hydrolysis of DNA containing ring-opened 7-methylguanine residues, releasing 2,6-diamino-4-hydroxy-5-(N-methyl)formamidopyrimidine.. The enzyme catalyses 2'-deoxyribonucleotide-(2'-deoxyribose 5'-phosphate)-2'-deoxyribonucleotide-DNA = a 3'-end 2'-deoxyribonucleotide-(2,3-dehydro-2,3-deoxyribose 5'-phosphate)-DNA + a 5'-end 5'-phospho-2'-deoxyribonucleoside-DNA + H(+). Its function is as follows. Involved in base excision repair of DNA damaged by oxidation or by mutagenic agents. Acts as a DNA glycosylase that recognizes and removes damaged bases. Has a preference for oxidized purines, such as 7,8-dihydro-8-oxoguanine (8-oxoG). Has AP (apurinic/apyrimidinic) lyase activity and introduces nicks in the DNA strand. Cleaves the DNA backbone by beta-delta elimination to generate a single-strand break at the site of the removed base with both 3'- and 5'-phosphates. The chain is Formamidopyrimidine-DNA glycosylase from Sodalis glossinidius (strain morsitans).